The primary structure comprises 691 residues: Elongation factor G (691 aa).

The tr-type G domain occupies 8-283 (EDYRNFGIMA…AVVDYLPTPI (276 aa)). Residues 17 to 24 (AHIDAGKT), 81 to 85 (DTPGH), and 135 to 138 (NKMD) contribute to the GTP site.

It belongs to the TRAFAC class translation factor GTPase superfamily. Classic translation factor GTPase family. EF-G/EF-2 subfamily.

It is found in the cytoplasm. Functionally, catalyzes the GTP-dependent ribosomal translocation step during translation elongation. During this step, the ribosome changes from the pre-translocational (PRE) to the post-translocational (POST) state as the newly formed A-site-bound peptidyl-tRNA and P-site-bound deacylated tRNA move to the P and E sites, respectively. Catalyzes the coordinated movement of the two tRNA molecules, the mRNA and conformational changes in the ribosome. The polypeptide is Elongation factor G (Beijerinckia indica subsp. indica (strain ATCC 9039 / DSM 1715 / NCIMB 8712)).